A 320-amino-acid polypeptide reads, in one-letter code: Malate dehydrogenase (320 aa).

NAD(+) is bound by residues 10 to 15 (GAGQIG) and Asp34. Positions 83 and 89 each coordinate substrate. Residues Asn96 and 119–121 (ITN) contribute to the NAD(+) site. The substrate site is built by Asn121 and Arg152. Residue His176 is the Proton acceptor of the active site.

The protein belongs to the LDH/MDH superfamily. MDH type 3 family.

The enzyme catalyses (S)-malate + NAD(+) = oxaloacetate + NADH + H(+). In terms of biological role, catalyzes the reversible oxidation of malate to oxaloacetate. The polypeptide is Malate dehydrogenase (Ruegeria pomeroyi (strain ATCC 700808 / DSM 15171 / DSS-3) (Silicibacter pomeroyi)).